The sequence spans 179 residues: Nucleoside diphosphate kinase 6 (179 aa).

Positions 18, 67, 95, 101, 115, and 125 each coordinate ATP. His-128 acts as the Pros-phosphohistidine intermediate in catalysis.

This sequence belongs to the NDK family. The cofactor is Mg(2+).

It catalyses the reaction a 2'-deoxyribonucleoside 5'-diphosphate + ATP = a 2'-deoxyribonucleoside 5'-triphosphate + ADP. It carries out the reaction a ribonucleoside 5'-diphosphate + ATP = a ribonucleoside 5'-triphosphate + ADP. Functionally, major role in the synthesis of nucleoside triphosphates other than ATP. The ATP gamma phosphate is transferred to the NDP beta phosphate via a ping-pong mechanism, using a phosphorylated active-site intermediate. This chain is Nucleoside diphosphate kinase 6 (nme6), found in Xenopus tropicalis (Western clawed frog).